The chain runs to 285 residues: MNTVKTLRELRAAVAQARAEGKQIGFVPTMGNLHAGHASLVQIAAQRADFVVASIFVNPLQFGAGEDLDKYPRTLAADQERLLAAGCHLLFHPDAAEMYPHGMGDQTRVTVPGVSEGLCGASRPGHFEGVATVVTKLFNMVQPDLAVFGEKDYQQLAVIRALVQDLNMPIQIIGAPTQRAEDGLALSSRNGYLSAEQRAVAPALYRSLQSIAEALHHGARDYARLIETAQTQQREAGFTPDYLEIRNALNLRPAQLDDRHLVVLTAAHLGSTRLIDNLLVELAGQ.

30–37 contributes to the ATP binding site; the sequence is MGNLHAGH. Residue histidine 37 is the Proton donor of the active site. (R)-pantoate is bound at residue glutamine 61. Residue glutamine 61 participates in beta-alanine binding. Position 149 to 152 (149 to 152) interacts with ATP; that stretch reads GEKD. Glutamine 155 provides a ligand contact to (R)-pantoate. 186–189 is an ATP binding site; it reads LSSR.

This sequence belongs to the pantothenate synthetase family. Homodimer.

The protein localises to the cytoplasm. The catalysed reaction is (R)-pantoate + beta-alanine + ATP = (R)-pantothenate + AMP + diphosphate + H(+). Its pathway is cofactor biosynthesis; (R)-pantothenate biosynthesis; (R)-pantothenate from (R)-pantoate and beta-alanine: step 1/1. Catalyzes the condensation of pantoate with beta-alanine in an ATP-dependent reaction via a pantoyl-adenylate intermediate. In Ectopseudomonas mendocina (strain ymp) (Pseudomonas mendocina), this protein is Pantothenate synthetase.